Reading from the N-terminus, the 686-residue chain is Rhophilin-2 (686 aa).

One can recognise an REM-1 domain in the interval asparagine 26 to valine 100. An interaction with Rho region spans residues glutamine 46–asparagine 66. A BRO1 domain is found at proline 111–aspartate 460. The region spanning arginine 515 to leucine 593 is the PDZ domain. Threonine 655 is modified (phosphothreonine).

It belongs to the RHPN family. As to quaternary structure, interacts with GTP-bound RhoA and RhoB. Interacts with both GTP- and GDP-bound RhoA. Interacts with KRT18. As to expression, mainly expressed in thyroid.

The protein localises to the cytoplasm. It localises to the perinuclear region. In terms of biological role, binds specifically to GTP-Rho. May function in a Rho pathway to limit stress fiber formation and/or increase the turnover of F-actin structures in the absence of high levels of RhoA activity. This is Rhophilin-2 (RHPN2) from Canis lupus familiaris (Dog).